The sequence spans 242 residues: Ribonuclease PH (242 aa).

Residues arginine 90 and 128 to 130 (GTR) each bind phosphate.

It belongs to the RNase PH family. As to quaternary structure, homohexameric ring arranged as a trimer of dimers.

The catalysed reaction is tRNA(n+1) + phosphate = tRNA(n) + a ribonucleoside 5'-diphosphate. Phosphorolytic 3'-5' exoribonuclease that plays an important role in tRNA 3'-end maturation. Removes nucleotide residues following the 3'-CCA terminus of tRNAs; can also add nucleotides to the ends of RNA molecules by using nucleoside diphosphates as substrates, but this may not be physiologically important. Probably plays a role in initiation of 16S rRNA degradation (leading to ribosome degradation) during starvation. The chain is Ribonuclease PH from Nocardioides sp. (strain ATCC BAA-499 / JS614).